A 338-amino-acid chain; its full sequence is Tetraacyldisaccharide 4'-kinase (338 aa).

53–60 contributes to the ATP binding site; that stretch reads VAGGAGKT.

This sequence belongs to the LpxK family.

It catalyses the reaction a lipid A disaccharide + ATP = a lipid IVA + ADP + H(+). It functions in the pathway glycolipid biosynthesis; lipid IV(A) biosynthesis; lipid IV(A) from (3R)-3-hydroxytetradecanoyl-[acyl-carrier-protein] and UDP-N-acetyl-alpha-D-glucosamine: step 6/6. Its function is as follows. Transfers the gamma-phosphate of ATP to the 4'-position of a tetraacyldisaccharide 1-phosphate intermediate (termed DS-1-P) to form tetraacyldisaccharide 1,4'-bis-phosphate (lipid IVA). This chain is Tetraacyldisaccharide 4'-kinase, found in Polaromonas sp. (strain JS666 / ATCC BAA-500).